Consider the following 516-residue polypeptide: Nucleolar complex protein 4 homolog (516 aa).

The next 3 membrane-spanning stretches (helical) occupy residues 296-316, 347-367, and 375-395; these read SACDVGGAISLLALNGLFILI, FFHLADLFLSSSHLPAYLVAA, and LALTAPPEALLMVLPLICNLL.

It belongs to the CBF/MAK21 family.

It localises to the nucleus membrane. Its subcellular location is the nucleus. The protein resides in the nucleolus. The polypeptide is Nucleolar complex protein 4 homolog (Noc4l) (Mus musculus (Mouse)).